Reading from the N-terminus, the 250-residue chain is Proteasome subunit alpha type-4 (250 aa).

Belongs to the peptidase T1A family. In terms of assembly, the 26S proteasome consists of a 20S proteasome core and two 19S regulatory subunits. The 20S proteasome core is composed of 28 subunits that are arranged in four stacked rings, resulting in a barrel-shaped structure. The two end rings are each formed by seven alpha subunits, and the two central rings are each formed by seven beta subunits. The catalytic chamber with the active sites is on the inside of the barrel.

It is found in the cytoplasm. It localises to the nucleus. The proteasome is a multicatalytic proteinase complex which is characterized by its ability to cleave peptides with Arg, Phe, Tyr, Leu, and Glu adjacent to the leaving group at neutral or slightly basic pH. The proteasome has an ATP-dependent proteolytic activity. The protein is Proteasome subunit alpha type-4 (psmA4) of Dictyostelium discoideum (Social amoeba).